The sequence spans 227 residues: Adapter protein MecA 1 (227 aa).

It belongs to the MecA family. Homodimer.

Enables the recognition and targeting of unfolded and aggregated proteins to the ClpC protease or to other proteins involved in proteolysis. Acts negatively in the development of competence by binding ComK and recruiting it to the ClpCP protease. When overexpressed, inhibits sporulation. Also involved in Spx degradation by ClpC. The polypeptide is Adapter protein MecA 1 (mecA1) (Bacillus anthracis).